Reading from the N-terminus, the 94-residue chain is Co-chaperonin GroES (94 aa).

Belongs to the GroES chaperonin family. As to quaternary structure, heptamer of 7 subunits arranged in a ring. Interacts with the chaperonin GroEL.

The protein localises to the cytoplasm. Its function is as follows. Together with the chaperonin GroEL, plays an essential role in assisting protein folding. The GroEL-GroES system forms a nano-cage that allows encapsulation of the non-native substrate proteins and provides a physical environment optimized to promote and accelerate protein folding. GroES binds to the apical surface of the GroEL ring, thereby capping the opening of the GroEL channel. In Lactococcus lactis subsp. cremoris (strain SK11), this protein is Co-chaperonin GroES.